We begin with the raw amino-acid sequence, 444 residues long: Trigger factor (444 aa).

The region spanning 160-245 (DMQVTFDFEG…VKQVEKPKLP (86 aa)) is the PPIase FKBP-type domain.

It belongs to the FKBP-type PPIase family. Tig subfamily.

It is found in the cytoplasm. The enzyme catalyses [protein]-peptidylproline (omega=180) = [protein]-peptidylproline (omega=0). Its function is as follows. Involved in protein export. Acts as a chaperone by maintaining the newly synthesized protein in an open conformation. Functions as a peptidyl-prolyl cis-trans isomerase. The protein is Trigger factor of Acinetobacter baumannii (strain AB0057).